The sequence spans 593 residues: NADH-quinone oxidoreductase subunit C/D (593 aa).

The interval 1 to 184 (MTADNALYIP…DPYSLTLAKQ (184 aa)) is NADH dehydrogenase I subunit C. The NADH dehydrogenase I subunit D stretch occupies residues 208–593 (DYMFLNLGPN…IDFVMADVDR (386 aa)).

The protein in the N-terminal section; belongs to the complex I 30 kDa subunit family. It in the C-terminal section; belongs to the complex I 49 kDa subunit family. In terms of assembly, NDH-1 is composed of 13 different subunits. Subunits NuoB, CD, E, F, and G constitute the peripheral sector of the complex.

Its subcellular location is the cell inner membrane. It catalyses the reaction a quinone + NADH + 5 H(+)(in) = a quinol + NAD(+) + 4 H(+)(out). Its function is as follows. NDH-1 shuttles electrons from NADH, via FMN and iron-sulfur (Fe-S) centers, to quinones in the respiratory chain. The immediate electron acceptor for the enzyme in this species is believed to be ubiquinone. Couples the redox reaction to proton translocation (for every two electrons transferred, four hydrogen ions are translocated across the cytoplasmic membrane), and thus conserves the redox energy in a proton gradient. This Pseudomonas syringae pv. tomato (strain ATCC BAA-871 / DC3000) protein is NADH-quinone oxidoreductase subunit C/D.